A 567-amino-acid chain; its full sequence is Geranylgeranyl transferase type-2 subunit alpha (567 aa).

PFTA repeat units follow at residues 44 to 78 (LDESVLELTSQILGANPDFATLWNCRREVLQQLET), 88 to 122 (LVKAELGFLESCLRVNPKSYGTWHHRCWLLGRLPE), 124 to 158 (NWTRELELCARFLEVDERNFHCWDYRRFVATQAAV), 159 to 193 (PPAEELAFTDSLITRNFSNYSSWHYRSCLLPQLHP), 207 to 241 (VLLKELELVQNAFFTDPNDQSAWFYHRWLLGRADP), and 363 to 397 (VLQSELESCKELQELEPENKWCLLTIILLMRALDP). A Phosphoserine modification is found at S98. LRR repeat units lie at residues 442 to 463 (EVRVLHLAHKDLTVLCHLEQLL), 464 to 486 (LVTHLDLSHNRLRTLPPALAALR), 487 to 508 (CLEVLQASDNAIESLDGVTNLP), 509 to 530 (RLQELLLCNNRLQRPAVLQPLA), and 534 to 555 (RLVLLNLQGNPLCQAVGILEQL).

The protein belongs to the protein prenyltransferase subunit alpha family. As to quaternary structure, heterotrimer composed of RABGGTA, RABGGTB and CHM; within this trimer, RABGGTA and RABGGTB form the catalytic component B, while CHM (component A) mediates peptide substrate binding. The Rab GGTase dimer (RGGT) interacts with CHM (component A) prior to Rab protein binding; the association is stabilized by geranylgeranyl pyrophosphate (GGpp). The CHM:RGGT:Rab complex is destabilized by GGpp. Interacts with non-phosphorylated form of RAB8A; phosphorylation of RAB8A at 'Thr-72' disrupts this interaction.

It catalyses the reaction geranylgeranyl diphosphate + L-cysteinyl-[protein] = S-geranylgeranyl-L-cysteinyl-[protein] + diphosphate. Its activity is regulated as follows. The enzymatic reaction requires the aid of a Rab escort protein (also called component A), such as CHM. Catalyzes the transfer of a geranylgeranyl moiety from geranylgeranyl diphosphate to both cysteines of Rab proteins with the C-terminal sequence -XXCC, -XCXC and -CCXX, such as RAB1A, RAB3A, RAB5A and RAB7A. The polypeptide is Geranylgeranyl transferase type-2 subunit alpha (RABGGTA) (Pongo abelii (Sumatran orangutan)).